A 405-amino-acid polypeptide reads, in one-letter code: Type III polyketide synthase 10 (405 aa).

The span at 1-18 shows a compositional bias: polar residues; the sequence is MVSTNAGGIASKQASSMA. A disordered region spans residues 1-20; that stretch reads MVSTNAGGIASKQASSMAPN. Cys170 acts as the Nucleophile in catalysis.

This sequence belongs to the thiolase-like superfamily. Chalcone/stilbene synthases family. Interacts with STS1. Expressed in adult flowers.

It localises to the endoplasmic reticulum. Plant type III polyketide synthases (PKSs) that catalyzes the condensation of fatty acyl-CoA with malonyl-CoA to generate triketide and tetraketide alpha-pyrones, the main components of pollen exine and potential sporopollenin precursors. May be involved in the synthesis of sporopollenin precursors in tapetal cells to regulate pollen wall formation. Required for exine and Ubisch body formation in anthers. Does not possess chalcone synthase (CHS) activity in vitro with the substrates 4-coumaroyl-CoA and malonyl-CoA. The polypeptide is Type III polyketide synthase 10 (Oryza sativa subsp. japonica (Rice)).